We begin with the raw amino-acid sequence, 194 residues long: Fibroblast growth factor 7 (194 aa).

The signal sequence occupies residues 1-31 (MRKWILTWILPSLLYRSCFHIICLVGTISLA). An N-linked (GlcNAc...) asparagine glycan is attached at N45.

Belongs to the heparin-binding growth factors family. Interacts with FGFBP1. Interacts with FGFR2. Affinity between fibroblast growth factors (FGFs) and their receptors is increased by heparan sulfate glycosaminoglycans that function as coreceptors.

It is found in the secreted. In terms of biological role, plays an important role in the regulation of embryonic development, cell proliferation and cell differentiation. Required for normal branching morphogenesis. Growth factor active on keratinocytes. Possible major paracrine effector of normal epithelial cell proliferation. This chain is Fibroblast growth factor 7 (FGF7), found in Cervus elaphus (Red deer).